The primary structure comprises 204 residues: Large ribosomal subunit protein uL4 (204 aa).

Residues I53–L77 form a disordered region. Residues V56 to K67 show a composition bias toward polar residues.

It belongs to the universal ribosomal protein uL4 family. As to quaternary structure, part of the 50S ribosomal subunit.

In terms of biological role, one of the primary rRNA binding proteins, this protein initially binds near the 5'-end of the 23S rRNA. It is important during the early stages of 50S assembly. It makes multiple contacts with different domains of the 23S rRNA in the assembled 50S subunit and ribosome. Functionally, forms part of the polypeptide exit tunnel. The sequence is that of Large ribosomal subunit protein uL4 from Wolbachia sp. subsp. Brugia malayi (strain TRS).